Consider the following 68-residue polypeptide: Large ribosomal subunit protein bL32 (68 aa).

Residues 1–21 are disordered; sequence MAVQQNKVSKSRRNNRRAHDS.

Belongs to the bacterial ribosomal protein bL32 family.

The chain is Large ribosomal subunit protein bL32 from Roseobacter denitrificans (strain ATCC 33942 / OCh 114) (Erythrobacter sp. (strain OCh 114)).